An 885-amino-acid chain; its full sequence is MSNVRISEIANELGYPSKEIVEKAQELGLKVKTHSNAVSLEEAEAIYEYVQTGVIPDKFKKKKSEPKAKKEPKKETEKEPAKKEEKPKTEPKKAATKAEPKPEKAKAEPKKEAQISEEKPKTEPKKEEPVKVEQKPAEAPKPKESLADVTQKRRGLVIVKKKKDYEAPAPIKEEKKAEAAVTNISDFKSMFSASDENLARKKKKEKKVTVVSKKDSAEKMDLLGGSDFGDIVLEDEDVVVLPDFSFKTPAPTPMQRTKQPNAMKTTVNNTINSFGEGGIQRRARKKHKKPENKQNSEAVTSINIPKEIRVYEFAEKLNKQPSEVIGKLFMLGMMTTKNDFLDEDAIEILADEFNVEVNIIDDQKEFDYVAAYEEEIKDDENLQPRAPVITIMGHVDHGKTSLLDYIRKSRVAAGEAGGITQHVGAYMVNKNGRNITFIDTPGHEAFTAMRARGAGVTDIVIIVVAADDGVKPQTKEAVSHAKAAGVPIIIAINKMDKESANPDLVKTGLAELDIMPTEWGGKYEFVPISAKTGMGIDDLLEIVLLQADLLELKANPKANAKATVIESSLQKGRGPVATIIVENGTLHVGDTVVAGVAYGKIRSLLDDQGRSLREIKPGECGVIVGLSEIAEAGETLIGVKTDKEAREYAQKKAEYIRQKELSKSTKVSIDELSAKIAEGELKTLPVIIKADVGGSLEALKASLEKLANDEIRVNVIHSGVGGITQSDVALASASNDCIILGFNIRPTGEIKEKAKESGVEIKTYNVIYNLIDDVKAILGGLMSPIIREEQLGQAQVRQVIHVPKVGTIAGCIVTEGTINRGAKIRLIREGVVVYEGLVSSLKRFKDDVKEVAKGYECGVGIENFNDIRENDYIESFKEVKEKATL.

2 disordered regions span residues 55-150 and 269-300; these read IPDK…ADVT and NTIN…EAVT. The segment covering 65–146 has biased composition (basic and acidic residues); sequence EPKAKKEPKK…AEAPKPKESL (82 aa). Residues 281–290 show a composition bias toward basic residues; it reads RRARKKHKKP. Positions 384–553 constitute a tr-type G domain; sequence PRAPVITIMG…LLQADLLELK (170 aa). Positions 393–400 are G1; that stretch reads GHVDHGKT. 393-400 is a GTP binding site; that stretch reads GHVDHGKT. The segment at 418 to 422 is G2; sequence GITQH. Positions 439-442 are G3; it reads DTPG. GTP-binding positions include 439–443 and 493–496; these read DTPGH and NKMD. The G4 stretch occupies residues 493–496; sequence NKMD. The segment at 529-531 is G5; the sequence is SAK.

The protein belongs to the TRAFAC class translation factor GTPase superfamily. Classic translation factor GTPase family. IF-2 subfamily.

The protein localises to the cytoplasm. In terms of biological role, one of the essential components for the initiation of protein synthesis. Protects formylmethionyl-tRNA from spontaneous hydrolysis and promotes its binding to the 30S ribosomal subunits. Also involved in the hydrolysis of GTP during the formation of the 70S ribosomal complex. The sequence is that of Translation initiation factor IF-2 from Campylobacter concisus (strain 13826).